A 1036-amino-acid polypeptide reads, in one-letter code: Lethal(2) giant larvae protein homolog 1 (1036 aa).

WD repeat units follow at residues 38–71, 78–119, 139–175, 199–233, 239–271, 289–331, 339–373, 395–473, 517–592, and 601–662; these read SALA…FTGL, VTQM…GLSF, VTVV…GQTL, SLQG…EHVF, LESL…GSPP, AINK…ETLV, VIDF…VLDL, TCSA…YKLS, QKVA…RMLI, and TAVT…LRQS. The residue at position 662 (S662) is a Phosphoserine. Positions 667 to 677 are enriched in basic residues; sequence RKSRVSGKKRT. Positions 667–688 are disordered; that stretch reads RKSRVSGKKRTPAASSKLQEAN. Positions 679-688 are enriched in polar residues; that stretch reads AASSKLQEAN. WD repeat units follow at residues 722 to 782, 791 to 843, 848 to 901, and 915 to 938; these read VRCL…KEVQ, AIAV…VSAK, LTAH…VHYS, and VFTR…SLSA. The residue at position 957 (T957) is a Phosphothreonine. 3 positions are modified to phosphoserine: S964, S982, and S989. The segment at 980–1002 is disordered; sequence PESCEGSPSSAHSKRADTMEPPE.

Belongs to the WD repeat L(2)GL family. Associated with nonmuscle myosin II heavy chain. Interacts with PRKCI/aPKC, PARD6B/Par-6 and PARD6A. Interacts with STX4A. Interacts with RAB10 (GDP-bound form); the interaction is direct and promotes RAB10 association with membranes and activation through competition with the Rab inhibitor GDI1. Interacts with DCAF1. Phosphorylated by PRKCI. In terms of tissue distribution, widely expressed. Expressed in brain, ovary, testis, with moderate expression in lever, uterus, lung and kidney.

Its subcellular location is the early endosome membrane. The protein localises to the golgi apparatus. It is found in the trans-Golgi network membrane. It localises to the cell projection. The protein resides in the axon. Its subcellular location is the golgi apparatus membrane. The protein localises to the cytoplasm. It is found in the cytoskeleton. Cortical cytoskeleton protein found in a complex involved in maintaining cell polarity and epithelial integrity. Involved in the regulation of mitotic spindle orientation, proliferation, differentiation and tissue organization of neuroepithelial cells. Involved in axonogenesis through RAB10 activation thereby regulating vesicular membrane trafficking toward the axonal plasma membrane. The sequence is that of Lethal(2) giant larvae protein homolog 1 (LLGL1) from Bos taurus (Bovine).